The sequence spans 130 residues: Small ribosomal subunit protein uS8 (130 aa).

This sequence belongs to the universal ribosomal protein uS8 family. Part of the 30S ribosomal subunit. Contacts proteins S5 and S12.

One of the primary rRNA binding proteins, it binds directly to 16S rRNA central domain where it helps coordinate assembly of the platform of the 30S subunit. The chain is Small ribosomal subunit protein uS8 from Alcanivorax borkumensis (strain ATCC 700651 / DSM 11573 / NCIMB 13689 / SK2).